The primary structure comprises 255 residues: DNA repair protein RecO (255 aa).

It belongs to the RecO family.

Involved in DNA repair and RecF pathway recombination. This Listeria monocytogenes serotype 4a (strain HCC23) protein is DNA repair protein RecO.